Here is a 112-residue protein sequence, read N- to C-terminus: Photosystem II reaction center Psb28 protein (112 aa).

It belongs to the Psb28 family. In terms of assembly, part of the photosystem II complex.

The protein resides in the plastid. It localises to the cyanelle thylakoid membrane. The polypeptide is Photosystem II reaction center Psb28 protein (Cyanophora paradoxa).